Reading from the N-terminus, the 177-residue chain is Coatomer subunit zeta-1 (177 aa).

This sequence belongs to the adaptor complexes small subunit family. In terms of assembly, oligomeric complex that consists of at least the alpha, beta, beta', gamma, delta, epsilon and zeta subunits.

It localises to the cytoplasm. It is found in the golgi apparatus membrane. Its subcellular location is the cytoplasmic vesicle. The protein localises to the COPI-coated vesicle membrane. In terms of biological role, the coatomer is a cytosolic protein complex that binds to dilysine motifs and reversibly associates with Golgi non-clathrin-coated vesicles, which further mediate biosynthetic protein transport from the ER, via the Golgi up to the trans Golgi network. Coatomer complex is required for budding from Golgi membranes, and is essential for the retrograde Golgi-to-ER transport of dilysine-tagged proteins. The zeta subunit may be involved in regulating the coat assembly and, hence, the rate of biosynthetic protein transport due to its association-dissociation properties with the coatomer complex. In Arabidopsis thaliana (Mouse-ear cress), this protein is Coatomer subunit zeta-1.